The sequence spans 324 residues: Rho crystallin (324 aa).

An N-acetylthreonine modification is found at Thr-2. NADP(+) is bound at residue Ser-218–Asn-281.

The protein belongs to the aldo/keto reductase family. As to quaternary structure, monomer.

This Aquarana catesbeiana (American bullfrog) protein is Rho crystallin.